Reading from the N-terminus, the 314-residue chain is Acetyl-coenzyme A carboxylase carboxyl transferase subunit alpha (314 aa).

Residues 32–289 (EIDMLEASLE…KSAFVEQLDS (258 aa)) enclose the CoA carboxyltransferase C-terminal domain.

Belongs to the AccA family. Acetyl-CoA carboxylase is a heterohexamer composed of biotin carboxyl carrier protein (AccB), biotin carboxylase (AccC) and two subunits each of ACCase subunit alpha (AccA) and ACCase subunit beta (AccD).

It localises to the cytoplasm. It carries out the reaction N(6)-carboxybiotinyl-L-lysyl-[protein] + acetyl-CoA = N(6)-biotinyl-L-lysyl-[protein] + malonyl-CoA. Its pathway is lipid metabolism; malonyl-CoA biosynthesis; malonyl-CoA from acetyl-CoA: step 1/1. Functionally, component of the acetyl coenzyme A carboxylase (ACC) complex. First, biotin carboxylase catalyzes the carboxylation of biotin on its carrier protein (BCCP) and then the CO(2) group is transferred by the carboxyltransferase to acetyl-CoA to form malonyl-CoA. The chain is Acetyl-coenzyme A carboxylase carboxyl transferase subunit alpha from Staphylococcus aureus (strain bovine RF122 / ET3-1).